The primary structure comprises 438 residues: sn-glycerol-3-phosphate-binding periplasmic protein UgpB (438 aa).

The N-terminal stretch at 1-23 (MKPLHYTASALALGLALMGNAQA) is a signal peptide. Residues tyrosine 65, glutamate 89, serine 144, serine 270, glycine 307, tyrosine 346, and arginine 397 each coordinate sn-glycerol 3-phosphate.

The protein belongs to the bacterial solute-binding protein 1 family. As to quaternary structure, the complex is composed of two ATP-binding proteins (UgpC), two transmembrane proteins (UgpA and UgpE) and a solute-binding protein (UgpB).

The protein localises to the periplasm. In terms of biological role, part of the ABC transporter complex UgpBAEC involved in sn-glycerol-3-phosphate (G3P) import. Binds G3P. In Shigella flexneri serotype 5b (strain 8401), this protein is sn-glycerol-3-phosphate-binding periplasmic protein UgpB (ugpB).